The primary structure comprises 301 residues: Nucleosome assembly protein 1;3 (301 aa).

A coiled-coil region spans residues 15 to 69 (VETLKNKLQALAEQHVDVLESLAPVVRKRVDVLIEIQSQHDELEAKFLEEKAALE). Positions 36–51 (LAPVVRKRVDVLIEIQ) match the Nuclear export signal motif. The segment at 278-301 (DEDYGASWVDDEEDDDDEYSDEEA) is disordered.

This sequence belongs to the nucleosome assembly protein (NAP) family.

The protein resides in the nucleus. It is found in the cytoplasm. Its function is as follows. May modulate chromatin structure by regulation of nucleosome assembly/disassembly. This is Nucleosome assembly protein 1;3 (NAP1;3) from Oryza sativa subsp. japonica (Rice).